The chain runs to 179 residues: Large ribosomal subunit protein bL9 (179 aa).

The segment at 156-179 (PEGAPVPVAEEPAAEAEQAEVAAE) is disordered. Over residues 157 to 166 (EGAPVPVAEE) the composition is skewed to low complexity. Positions 167-179 (PAAEAEQAEVAAE) are enriched in acidic residues.

Belongs to the bacterial ribosomal protein bL9 family.

In terms of biological role, binds to the 23S rRNA. The protein is Large ribosomal subunit protein bL9 of Porphyromonas gingivalis (strain ATCC 33277 / DSM 20709 / CIP 103683 / JCM 12257 / NCTC 11834 / 2561).